Consider the following 118-residue polypeptide: Large ribosomal subunit protein uL22 (118 aa).

This sequence belongs to the universal ribosomal protein uL22 family. In terms of assembly, part of the 50S ribosomal subunit.

In terms of biological role, this protein binds specifically to 23S rRNA; its binding is stimulated by other ribosomal proteins, e.g. L4, L17, and L20. It is important during the early stages of 50S assembly. It makes multiple contacts with different domains of the 23S rRNA in the assembled 50S subunit and ribosome. Functionally, the globular domain of the protein is located near the polypeptide exit tunnel on the outside of the subunit, while an extended beta-hairpin is found that lines the wall of the exit tunnel in the center of the 70S ribosome. The sequence is that of Large ribosomal subunit protein uL22 from Levilactobacillus brevis (strain ATCC 367 / BCRC 12310 / CIP 105137 / JCM 1170 / LMG 11437 / NCIMB 947 / NCTC 947) (Lactobacillus brevis).